Consider the following 398-residue polypeptide: MSESVHTNTSICSKGMLSVIVAQFLSAFGDNALLFATLALLKAQFYPDWSQPVLQMVFVGAYILFAPFVGQIADSFAKGRVMMFANGLKLAGAASICLGVNPFVGYTLVGIGAAAYSPAKYGILGELTTGNKLVKANGLMEASTIAAILLGSVAGGVLADWHVIAALVACTLAYAGAVVANLFIPKLVAARPGQSWQLAAMIRSFFCACVVLWRNGETRFSLVGTGLFWGAGVTLRFLVVLWVPVALGITDNATPTYLNAMVAVGIVVGAGAAAKLVTLETVSRCMPAGILIGVVVAMFSLQHALLPAYALLLLIGILGGFFVVPLNALLQERGKKSVGAGNAIAVQNLGENSTMLLMLGLYSLAVMVGVPAVATGIGFGVLFALAIAALWIWQRRQA.

Helical transmembrane passes span 19 to 39 (VIVA…ATLA), 53 to 73 (VLQM…GQIA), 96 to 116 (ICLG…AAAY), 139 to 159 (LMEA…GVLA), 164 to 184 (IAAL…NLFI), 195 to 213 (SWQL…VVLW), 227 to 247 (LFWG…PVAL), 257 to 277 (YLNA…AKLV), 281 to 301 (TVSR…MFSL), 304 to 324 (ALLP…FFVV), 352 to 372 (NSTM…GVPA), and 373 to 393 (VATG…LWIW).

The protein belongs to the major facilitator superfamily. LplT (TC 2.A.1.42) family.

Its subcellular location is the cell inner membrane. Functionally, catalyzes the facilitated diffusion of 2-acyl-glycero-3-phosphoethanolamine (2-acyl-GPE) into the cell. In Salmonella arizonae (strain ATCC BAA-731 / CDC346-86 / RSK2980), this protein is Lysophospholipid transporter LplT.